We begin with the raw amino-acid sequence, 536 residues long: Major facilitator superfamily domain-containing protein 4B (536 aa).

12 consecutive transmembrane segments (helical) span residues 19–39 (LTYWSVFFSFGLSIAFLGPTI), 53–73 (ITWVFFAQQLCLLIGSSSGGA), 81–101 (ALLALFLSSLIISVVFSIIPL), 105–125 (VLLLAIAMAVSGLAMGIIDTI), 140–160 (IFLQALHFFIGLGALLSPLIA), 211–231 (YAFWIMALINLPVPIAVFVLM), 297–317 (FFLIHIFGGMVLFMTEGIMGV), 341–361 (LNCIFWAAITAGRLVSIPLSY), 366–386 (VHLLLTNMAGVIVTLLLLMIL), 391–411 (VFLFVGTTFLGLFISSVFPCL), 428–448 (VLVTLSGMGEMTLQVLAGTLI), and 456–476 (FLVCGLVIGCLGFIFLLSVIL).

The protein belongs to the major facilitator superfamily.

The protein localises to the membrane. This Danio rerio (Zebrafish) protein is Major facilitator superfamily domain-containing protein 4B.